Consider the following 327-residue polypeptide: L-lactate dehydrogenase (327 aa).

NAD(+)-binding positions include valine 18, aspartate 39, arginine 44, tyrosine 69, and glycine 83 to leucine 84. Substrate contacts are provided by residues glutamine 86, arginine 92, and asparagine 124–aspartate 127. Residues alanine 122–asparagine 124 and serine 147 each bind NAD(+). Aspartate 152–arginine 155 serves as a coordination point for substrate. 2 residues coordinate beta-D-fructose 1,6-bisphosphate: arginine 157 and histidine 172. The active-site Proton acceptor is the histidine 179. Tyrosine 224 carries the post-translational modification Phosphotyrosine. Threonine 233 serves as a coordination point for substrate.

Belongs to the LDH/MDH superfamily. LDH family. As to quaternary structure, homotetramer.

It localises to the cytoplasm. The enzyme catalyses (S)-lactate + NAD(+) = pyruvate + NADH + H(+). It functions in the pathway fermentation; pyruvate fermentation to lactate; (S)-lactate from pyruvate: step 1/1. Its activity is regulated as follows. Allosterically activated by fructose 1,6-bisphosphate (FBP). In terms of biological role, catalyzes the conversion of lactate to pyruvate. The chain is L-lactate dehydrogenase from Streptococcus suis (strain 98HAH33).